Here is a 247-residue protein sequence, read N- to C-terminus: 2,3-bisphosphoglycerate-dependent phosphoglycerate mutase (247 aa).

Residues 13–20 (RHGESDWN), 26–27 (TG), R65, 92–95 (ERHY), K103, 119–120 (RR), and 186–187 (GN) contribute to the substrate site. The active-site Tele-phosphohistidine intermediate is the H14. Catalysis depends on E92, which acts as the Proton donor/acceptor.

This sequence belongs to the phosphoglycerate mutase family. BPG-dependent PGAM subfamily. Homotetramer, dimer of dimers.

The enzyme catalyses (2R)-2-phosphoglycerate = (2R)-3-phosphoglycerate. It participates in carbohydrate degradation; glycolysis; pyruvate from D-glyceraldehyde 3-phosphate: step 3/5. Catalyzes the interconversion of 2-phosphoglycerate and 3-phosphoglycerate. The sequence is that of 2,3-bisphosphoglycerate-dependent phosphoglycerate mutase from Mycobacterium leprae (strain Br4923).